We begin with the raw amino-acid sequence, 112 residues long: Small ribosomal subunit protein bS6 (112 aa).

Belongs to the bacterial ribosomal protein bS6 family.

In terms of biological role, binds together with bS18 to 16S ribosomal RNA. In Christiangramia forsetii (strain DSM 17595 / CGMCC 1.15422 / KT0803) (Gramella forsetii), this protein is Small ribosomal subunit protein bS6.